Reading from the N-terminus, the 224-residue chain is MMFLWWLLLLGTAISHKVHSQEQPLLEEDTAPADNLDVLEKAKGILIRSFLEGFQEGQQINRDLPDAMEMIYKRQHPGKRFQEEIEKRQHPGKRDLEDLQLSKRQHPGRRYLEDMEKRQHPGKREEGDWSRGYLTDDSGYLDLFSDVSKRQHPGKRVPDPFFIKRQHPGKRGIEEEDDTEFENSKEVGKRQHPGKRYDPCEGPNAYNCNSGNLQLDSVEEGWAA.

The first 15 residues, 1–15 (MMFLWWLLLLGTAIS), serve as a signal peptide directing secretion. Gln-75 carries the post-translational modification Pyrrolidone carboxylic acid. Pro-77 carries the post-translational modification Proline amide. Positions 86 to 101 (EKRQHPGKRDLEDLQL) are enriched in basic and acidic residues. Disordered regions lie at residues 86–131 (EKRQ…DWSR) and 150–212 (RQHP…NSGN). Gln-89 is modified (pyrrolidone carboxylic acid). Position 91 is a proline amide (Pro-91). Gln-105 is subject to Pyrrolidone carboxylic acid. The residue at position 107 (Pro-107) is a Proline amide. The span at 110–129 (RYLEDMEKRQHPGKREEGDW) shows a compositional bias: basic and acidic residues. Gln-119 carries the pyrrolidone carboxylic acid modification. At Pro-121 the chain carries Proline amide. Gln-151 carries the post-translational modification Pyrrolidone carboxylic acid. Proline amide is present on Pro-153. The residue at position 166 (Gln-166) is a Pyrrolidone carboxylic acid. Pro-168 is modified (proline amide). A compositionally biased stretch (basic and acidic residues) spans 182 to 199 (ENSKEVGKRQHPGKRYDP). The residue at position 191 (Gln-191) is a Pyrrolidone carboxylic acid. Pro-193 is modified (proline amide).

This sequence belongs to the TRH family.

It localises to the secreted. The polypeptide is Pro-thyrotropin-releasing hormone-B (trh-b) (Xenopus laevis (African clawed frog)).